We begin with the raw amino-acid sequence, 617 residues long: DNA mismatch repair protein MutL (617 aa).

Positions 363-394 (YAPAYGARPPQPSAWSVDTSPHRPLDDGQNRF) are disordered. A compositionally biased stretch (basic and acidic residues) spans 382 to 392 (SPHRPLDDGQN).

Belongs to the DNA mismatch repair MutL/HexB family.

Functionally, this protein is involved in the repair of mismatches in DNA. It is required for dam-dependent methyl-directed DNA mismatch repair. May act as a 'molecular matchmaker', a protein that promotes the formation of a stable complex between two or more DNA-binding proteins in an ATP-dependent manner without itself being part of a final effector complex. The sequence is that of DNA mismatch repair protein MutL from Allorhizobium ampelinum (strain ATCC BAA-846 / DSM 112012 / S4) (Agrobacterium vitis (strain S4)).